Consider the following 204-residue polypeptide: Thiamine-phosphate synthase (204 aa).

Residues 34-38 (QYRDK) and D66 each bind 4-amino-2-methyl-5-(diphosphooxymethyl)pyrimidine. Residues D67 and D86 each coordinate Mg(2+). Position 104 (S104) interacts with 4-amino-2-methyl-5-(diphosphooxymethyl)pyrimidine. 131-133 (TST) is a 2-[(2R,5Z)-2-carboxy-4-methylthiazol-5(2H)-ylidene]ethyl phosphate binding site. 4-amino-2-methyl-5-(diphosphooxymethyl)pyrimidine is bound at residue K134. Residues G160 and 180–181 (VS) each bind 2-[(2R,5Z)-2-carboxy-4-methylthiazol-5(2H)-ylidene]ethyl phosphate.

It belongs to the thiamine-phosphate synthase family. Mg(2+) serves as cofactor.

The enzyme catalyses 2-[(2R,5Z)-2-carboxy-4-methylthiazol-5(2H)-ylidene]ethyl phosphate + 4-amino-2-methyl-5-(diphosphooxymethyl)pyrimidine + 2 H(+) = thiamine phosphate + CO2 + diphosphate. It carries out the reaction 2-(2-carboxy-4-methylthiazol-5-yl)ethyl phosphate + 4-amino-2-methyl-5-(diphosphooxymethyl)pyrimidine + 2 H(+) = thiamine phosphate + CO2 + diphosphate. The catalysed reaction is 4-methyl-5-(2-phosphooxyethyl)-thiazole + 4-amino-2-methyl-5-(diphosphooxymethyl)pyrimidine + H(+) = thiamine phosphate + diphosphate. Its pathway is cofactor biosynthesis; thiamine diphosphate biosynthesis; thiamine phosphate from 4-amino-2-methyl-5-diphosphomethylpyrimidine and 4-methyl-5-(2-phosphoethyl)-thiazole: step 1/1. Functionally, condenses 4-methyl-5-(beta-hydroxyethyl)thiazole monophosphate (THZ-P) and 2-methyl-4-amino-5-hydroxymethyl pyrimidine pyrophosphate (HMP-PP) to form thiamine monophosphate (TMP). The polypeptide is Thiamine-phosphate synthase (Picrophilus torridus (strain ATCC 700027 / DSM 9790 / JCM 10055 / NBRC 100828 / KAW 2/3)).